Reading from the N-terminus, the 188-residue chain is Elongation factor P (188 aa).

This sequence belongs to the elongation factor P family.

It is found in the cytoplasm. Its pathway is protein biosynthesis; polypeptide chain elongation. Its function is as follows. Involved in peptide bond synthesis. Stimulates efficient translation and peptide-bond synthesis on native or reconstituted 70S ribosomes in vitro. Probably functions indirectly by altering the affinity of the ribosome for aminoacyl-tRNA, thus increasing their reactivity as acceptors for peptidyl transferase. The chain is Elongation factor P from Rhodopseudomonas palustris (strain BisA53).